Consider the following 292-residue polypeptide: Elongation factor Ts (292 aa).

Residues 79–82 form an involved in Mg(2+) ion dislocation from EF-Tu region; that stretch reads TDFV.

It belongs to the EF-Ts family.

The protein localises to the cytoplasm. Associates with the EF-Tu.GDP complex and induces the exchange of GDP to GTP. It remains bound to the aminoacyl-tRNA.EF-Tu.GTP complex up to the GTP hydrolysis stage on the ribosome. In Staphylococcus epidermidis (strain ATCC 12228 / FDA PCI 1200), this protein is Elongation factor Ts.